Reading from the N-terminus, the 452-residue chain is Trigger factor (452 aa).

The 87-residue stretch at asparagine 170 to proline 256 folds into the PPIase FKBP-type domain.

It belongs to the FKBP-type PPIase family. Tig subfamily.

It localises to the cytoplasm. It catalyses the reaction [protein]-peptidylproline (omega=180) = [protein]-peptidylproline (omega=0). Functionally, involved in protein export. Acts as a chaperone by maintaining the newly synthesized protein in an open conformation. Functions as a peptidyl-prolyl cis-trans isomerase. The sequence is that of Trigger factor from Borrelia garinii subsp. bavariensis (strain ATCC BAA-2496 / DSM 23469 / PBi) (Borreliella bavariensis).